The primary structure comprises 441 residues: 3'-N-debenzoyl-2'-deoxytaxol N-benzoyltransferase (441 aa).

Catalysis depends on proton acceptor residues His-163 and Asp-373.

It belongs to the plant acyltransferase family.

The catalysed reaction is 3'-N-debenzoyltaxol + benzoyl-CoA = paclitaxel + CoA + H(+). Its pathway is alkaloid biosynthesis; taxol biosynthesis. Its function is as follows. Catalyzes the stereoselective coupling of the surrogate substrate N-debenzoyl-(3'RS)-2'-deoxytaxol with benzoyl-CoA to form predominantly one 3'-epimer of 2'-deoxytaxol. This enzymatic reaction constitutes the final acylation in the taxol biosynthetic pathway. This is 3'-N-debenzoyl-2'-deoxytaxol N-benzoyltransferase from Taxus canadensis (Canadian yew).